The primary structure comprises 371 residues: 4-hydroxy-3-methylbut-2-en-1-yl diphosphate synthase (flavodoxin) (371 aa).

Cys-272, Cys-275, Cys-307, and Glu-314 together coordinate [4Fe-4S] cluster.

The protein belongs to the IspG family. [4Fe-4S] cluster serves as cofactor.

The enzyme catalyses (2E)-4-hydroxy-3-methylbut-2-enyl diphosphate + oxidized [flavodoxin] + H2O + 2 H(+) = 2-C-methyl-D-erythritol 2,4-cyclic diphosphate + reduced [flavodoxin]. Its pathway is isoprenoid biosynthesis; isopentenyl diphosphate biosynthesis via DXP pathway; isopentenyl diphosphate from 1-deoxy-D-xylulose 5-phosphate: step 5/6. Functionally, converts 2C-methyl-D-erythritol 2,4-cyclodiphosphate (ME-2,4cPP) into 1-hydroxy-2-methyl-2-(E)-butenyl 4-diphosphate. The chain is 4-hydroxy-3-methylbut-2-en-1-yl diphosphate synthase (flavodoxin) from Pseudomonas paraeruginosa (strain DSM 24068 / PA7) (Pseudomonas aeruginosa (strain PA7)).